We begin with the raw amino-acid sequence, 410 residues long: uncharacterized protein (410 aa).

A signal peptide spans 1 to 41; sequence MVKSFRMKALIAGAAVAAAVSAGAVSDVPAAKVLQPTAAYA.

In terms of assembly, interacts with PcrA, Pdp, YclM, YkvL, YhcQ and YomL. The interaction with PcrA is not essential for cell viability or repair of UV-induced lesions.

It is found in the secreted. Increases the processivity of the PcrA helicase, but does not bind to DNA. This is an uncharacterized protein from Bacillus subtilis (strain 168).